The chain runs to 165 residues: MTGRLDEDLKDVTLLGNQNTKYLFEYSPEILEVFDNNHPNRDYFVKFNCPEFTSLCPKTGQPDFATIYISYIPEQKMVESKSLKLYLFSFRNHGDFHEDCMNVIMNDLIKLMDPRYIEVWGKFTPRGGISIDPYCNYGRPGTKYEQMADYRMMNHDLYPETIDNR.

Cys56 serves as the catalytic Thioimide intermediate. Asp63 functions as the Proton donor in the catalytic mechanism. Residues 78-80 and 97-98 contribute to the substrate site; these read VES and HE.

This sequence belongs to the GTP cyclohydrolase I family. QueF type 1 subfamily.

It localises to the cytoplasm. The catalysed reaction is 7-aminomethyl-7-carbaguanine + 2 NADP(+) = 7-cyano-7-deazaguanine + 2 NADPH + 3 H(+). The protein operates within tRNA modification; tRNA-queuosine biosynthesis. Catalyzes the NADPH-dependent reduction of 7-cyano-7-deazaguanine (preQ0) to 7-aminomethyl-7-deazaguanine (preQ1). This Bacillus cereus (strain ATCC 14579 / DSM 31 / CCUG 7414 / JCM 2152 / NBRC 15305 / NCIMB 9373 / NCTC 2599 / NRRL B-3711) protein is NADPH-dependent 7-cyano-7-deazaguanine reductase.